The primary structure comprises 326 residues: Metal-binding protein YtgA (326 aa).

A signal peptide spans 1–21; it reads MSFFHTRKYKLILRGLLCLAG. Positions 75, 141, 207, and 299 each coordinate Fe(2+).

Belongs to the bacterial solute-binding protein 9 family. As to quaternary structure, monomer.

It localises to the periplasm. Its function is as follows. Part of the ATP-binding cassette (ABC) transport system YtgABCD involved in metal import. Binds Fe(2+), Mn(2+) and Ni(2+), with a preference for Fe(2+) and delivers them to the membrane permease for translocation into the cytoplasm. This Chlamydia trachomatis serovar D (strain ATCC VR-885 / DSM 19411 / UW-3/Cx) protein is Metal-binding protein YtgA.